The chain runs to 231 residues: Ferredoxin-type protein NapG (231 aa).

The tat-type signal signal peptide spans 1-41 (MSRSAKPQNGRRRFLRDVVRTAGGLAAVGVALGLQQQTARA). 4 4Fe-4S ferredoxin-type domains span residues 50-81 (GAIN…LATL), 89-121 (TPYF…REIE), 130-166 (LAVL…LELE), and 177-208 (FLPT…VLPL). Residues cysteine 61, cysteine 64, cysteine 67, cysteine 71, cysteine 99, cysteine 102, cysteine 107, cysteine 111, cysteine 139, cysteine 147, cysteine 150, cysteine 154, cysteine 186, cysteine 189, cysteine 192, and cysteine 196 each contribute to the [4Fe-4S] cluster site.

[4Fe-4S] cluster serves as cofactor. Exported by the Tat system. The position of the signal peptide cleavage has not been experimentally proven.

Its subcellular location is the periplasm. Required for electron transfer from ubiquinol, via NapC, to the periplasmic nitrate reductase NapAB complex. The polypeptide is Ferredoxin-type protein NapG (napG) (Escherichia coli (strain K12)).